Reading from the N-terminus, the 293-residue chain is Eukaryotic translation initiation factor 3 subunit G (293 aa).

Disordered stretches follow at residues 1-32 (MPSIEFDDSKPSWADQVEEEGDEGSLPSPKET) and 163-206 (STGE…QPNR). The segment covering 194–206 (GGTRRGESMQPNR) has biased composition (basic and acidic residues). In terms of domain architecture, RRM spans 212-290 (ATIRVTNLSE…LILNVEWAKP (79 aa)).

The protein belongs to the eIF-3 subunit G family. Component of the eukaryotic translation initiation factor 3 (eIF-3) complex, which is composed of 13 subunits: eif3a, eif3b, eif3c, eif3d, eif3e, eif3f, eif3g, eif3h, eif3i, eif3j, eif3k, eif3l and eif3m.

It is found in the cytoplasm. Functionally, RNA-binding component of the eukaryotic translation initiation factor 3 (eIF-3) complex, which is involved in protein synthesis of a specialized repertoire of mRNAs and, together with other initiation factors, stimulates binding of mRNA and methionyl-tRNAi to the 40S ribosome. The eIF-3 complex specifically targets and initiates translation of a subset of mRNAs involved in cell proliferation. This subunit can bind 18S rRNA. The chain is Eukaryotic translation initiation factor 3 subunit G (eif3g) from Danio rerio (Zebrafish).